The chain runs to 150 residues: Large ribosomal subunit protein bL9 (150 aa).

It belongs to the bacterial ribosomal protein bL9 family.

Its function is as follows. Binds to the 23S rRNA. The sequence is that of Large ribosomal subunit protein bL9 from Streptococcus pyogenes serotype M3 (strain SSI-1).